Here is a 1442-residue protein sequence, read N- to C-terminus: CD109 antigen (1442 aa).

The first 21 residues, 1–21 (MRSRRLLSAAHLLCLCAVALA), serve as a signal peptide directing secretion. Asparagine 67, asparagine 117, asparagine 246, asparagine 278, asparagine 370, and asparagine 421 each carry an N-linked (GlcNAc...) asparagine glycan. Positions 595–704 (DKSVTLMENS…TWIWLDAYMG (110 aa)) are bait region (approximate). Positions 923–926 (CGEQ) form a cross-link, isoglutamyl cysteine thioester (Cys-Gln). The N-linked (GlcNAc...) asparagine glycan is linked to asparagine 1088. Alanine 1419 is lipidated: GPI-anchor amidated alanine. Positions 1420-1442 (TDSLRRSSSLLVFCSVLLYFVQH) are cleaved as a propeptide — removed in mature form.

The protein belongs to the protease inhibitor I39 (alpha-2-macroglobulin) family. In terms of assembly, heterodimer; disulfide-linked. Interacts with TGFB1 and TGFBR1. Forms a heteromeric complex with TGFBR1, TGFBR2 and TGFBR3 in a ligand-independent manner. Post-translationally, N-glycosylated. 2 forms of 150 (p150) and 120 kDa (p120) exist due to proteolytic degradation from a 180 kDa form.

It localises to the cell membrane. Its function is as follows. Modulates negatively TGFB1 signaling in keratinocytes. The sequence is that of CD109 antigen (Cd109) from Mus musculus (Mouse).